Consider the following 311-residue polypeptide: Protoheme IX farnesyltransferase (311 aa).

Transmembrane regions (helical) follow at residues 33-53 (VVML…PSPA), 55-75 (LWLL…AAAV), 104-124 (NALL…SSFI), 127-147 (LTAW…TLFL), 155-175 (IVIG…AVTG), 181-201 (GLLL…ALAL), 228-248 (IVLY…TRMM), 252-272 (YLVG…KLLV), and 287-307 (IIYL…FPIP).

Belongs to the UbiA prenyltransferase family. Protoheme IX farnesyltransferase subfamily.

The protein localises to the cell inner membrane. It carries out the reaction heme b + (2E,6E)-farnesyl diphosphate + H2O = Fe(II)-heme o + diphosphate. The protein operates within porphyrin-containing compound metabolism; heme O biosynthesis; heme O from protoheme: step 1/1. In terms of biological role, converts heme B (protoheme IX) to heme O by substitution of the vinyl group on carbon 2 of heme B porphyrin ring with a hydroxyethyl farnesyl side group. The chain is Protoheme IX farnesyltransferase from Teredinibacter turnerae (strain ATCC 39867 / T7901).